The chain runs to 340 residues: UPF0284 protein Saci_0020 (340 aa).

It belongs to the UPF0284 family.

The protein is UPF0284 protein Saci_0020 of Sulfolobus acidocaldarius (strain ATCC 33909 / DSM 639 / JCM 8929 / NBRC 15157 / NCIMB 11770).